The following is a 2767-amino-acid chain: Serine/threonine-protein kinase ATM (2767 aa).

In terms of domain architecture, FAT spans 1713-2317 (NVVMASNHCQ…FYQLYPLVFA (605 aa)). Positions 2419-2734 (WTNETTQCGG…KLDGREAGTM (316 aa)) constitute a PI3K/PI4K catalytic domain. Residues 2425 to 2431 (QCGGLNA) are G-loop. The catalytic loop stretch occupies residues 2601 to 2609 (GLGDRHTQN). The segment at 2621-2645 (HIDFGIAFEQGKIQTTPETVPFRLT) is activation loop. In terms of domain architecture, FATC spans 2735–2767 (GDSNVEAQVERLINEATLPSNLCMLFPGWDPHL).

It belongs to the PI3/PI4-kinase family. ATM subfamily.

It is found in the nucleus. Its subcellular location is the chromosome. It localises to the telomere. The catalysed reaction is L-seryl-[protein] + ATP = O-phospho-L-seryl-[protein] + ADP + H(+). It carries out the reaction L-threonyl-[protein] + ATP = O-phospho-L-threonyl-[protein] + ADP + H(+). Serine/threonine-protein kinase which recognizes the substrate consensus sequence [ST]-Q. Required to suppress spontaneous apoptosis of proliferating cells during development, and for their proper differentiation. Required for female fertility. Protects telomeres from fusion, maybe by recruiting or maintaining chromatin-modifying complexes such as Su(var)205/HP1. May activate checkpoint signaling in response to DNA double-stranded breaks induced by low-dose ionizing radiation. May phosphorylate histone H2AV. This Drosophila melanogaster (Fruit fly) protein is Serine/threonine-protein kinase ATM (tefu).